A 162-amino-acid polypeptide reads, in one-letter code: NADH-ubiquinone oxidoreductase subunit 8 (162 aa).

2 consecutive 4Fe-4S ferredoxin-type domains span residues 54–83 and 93–122; these read RRYQTGEERCIACKLCEAICPAQAITIESE and TRYDIDMTKCIYCGFCQEACPVDAIVEGPN. Positions 63, 66, 69, 73, 102, 105, 108, and 112 each coordinate [4Fe-4S] cluster.

Belongs to the complex I 23 kDa subunit family. [4Fe-4S] cluster is required as a cofactor.

It is found in the mitochondrion. The enzyme catalyses a ubiquinone + NADH + 5 H(+)(in) = a ubiquinol + NAD(+) + 4 H(+)(out). Functionally, core subunit of the mitochondrial membrane respiratory chain NADH dehydrogenase (Complex I) that is believed to belong to the minimal assembly required for catalysis. Complex I functions in the transfer of electrons from NADH to the respiratory chain. The immediate electron acceptor for the enzyme is believed to be ubiquinone. May donate electrons to ubiquinone. In Reclinomonas americana, this protein is NADH-ubiquinone oxidoreductase subunit 8 (NAD8).